Consider the following 246-residue polypeptide: E3 ubiquitin-protein ligase LubX (246 aa).

U-box domains are found at residues 36–109 and 131–204; these read TTPT…QTNY and EIPD…RKRE.

Interacts with host CLK1. Post-translationally, ubiquitinated in the presence of host E1 ubiquitin-activating enzyme, E2 ubiquitin-conjugating enzyme (UBE2D1 or UBE2D3) and ubiquitin.

It is found in the secreted. The protein localises to the host cell. The enzyme catalyses S-ubiquitinyl-[E2 ubiquitin-conjugating enzyme]-L-cysteine + [acceptor protein]-L-lysine = [E2 ubiquitin-conjugating enzyme]-L-cysteine + N(6)-ubiquitinyl-[acceptor protein]-L-lysine.. Its function is as follows. Effector proteins function to alter host cell physiology and promote bacterial survival in host tissues. This protein is an E3 ubiquitin ligase that interferes with host's ubiquitination pathway. Acts in conjunction with host E2 ubiquitin-conjugating enzymes UBE2D1 (UBCH5A) or UBE2D3 (UBCH5C), and mediates polyubiquitination of host kinase CLK1. In Legionella pneumophila subsp. pneumophila (strain Philadelphia 1 / ATCC 33152 / DSM 7513), this protein is E3 ubiquitin-protein ligase LubX (lubX).